The primary structure comprises 202 residues: Holliday junction branch migration complex subunit RuvA (202 aa).

The tract at residues 1-62 is domain I; it reads MYEYLHGLIT…DTAQTLYGFS (62 aa). The interval 63–141 is domain II; that stretch reads DFAEKQLFLK…DLAPATDDNT (79 aa). Residues 142–151 are flexible linker; it reads LFTPEVAPTT. The tract at residues 152–202 is domain III; it reads TENPQLADALAALTALGYRETAVKKITAQLRQFNGQTTNDYLSEGLRLLTK.

This sequence belongs to the RuvA family. As to quaternary structure, homotetramer. Forms an RuvA(8)-RuvB(12)-Holliday junction (HJ) complex. HJ DNA is sandwiched between 2 RuvA tetramers; dsDNA enters through RuvA and exits via RuvB. An RuvB hexamer assembles on each DNA strand where it exits the tetramer. Each RuvB hexamer is contacted by two RuvA subunits (via domain III) on 2 adjacent RuvB subunits; this complex drives branch migration. In the full resolvosome a probable DNA-RuvA(4)-RuvB(12)-RuvC(2) complex forms which resolves the HJ.

The protein localises to the cytoplasm. In terms of biological role, the RuvA-RuvB-RuvC complex processes Holliday junction (HJ) DNA during genetic recombination and DNA repair, while the RuvA-RuvB complex plays an important role in the rescue of blocked DNA replication forks via replication fork reversal (RFR). RuvA specifically binds to HJ cruciform DNA, conferring on it an open structure. The RuvB hexamer acts as an ATP-dependent pump, pulling dsDNA into and through the RuvAB complex. HJ branch migration allows RuvC to scan DNA until it finds its consensus sequence, where it cleaves and resolves the cruciform DNA. This is Holliday junction branch migration complex subunit RuvA from Levilactobacillus brevis (strain ATCC 367 / BCRC 12310 / CIP 105137 / JCM 1170 / LMG 11437 / NCIMB 947 / NCTC 947) (Lactobacillus brevis).